We begin with the raw amino-acid sequence, 265 residues long: Phosphatidylglycerol--prolipoprotein diacylglyceryl transferase (265 aa).

Helical transmembrane passes span 10-30, 56-76, 87-107, and 117-137; these read VAIA…LIGI, LVFW…VLFY, LILQ…GVLL, and GKGF…GLGA. Arg-139 serves as a coordination point for a 1,2-diacyl-sn-glycero-3-phospho-(1'-sn-glycerol). The next 3 helical transmembrane spans lie at 172–192, 200–220, and 227–247; these read PSQL…LWFY, MAVS…VEFV, and LGYL…PMIL.

Belongs to the Lgt family.

The protein localises to the cell inner membrane. It catalyses the reaction L-cysteinyl-[prolipoprotein] + a 1,2-diacyl-sn-glycero-3-phospho-(1'-sn-glycerol) = an S-1,2-diacyl-sn-glyceryl-L-cysteinyl-[prolipoprotein] + sn-glycerol 1-phosphate + H(+). It functions in the pathway protein modification; lipoprotein biosynthesis (diacylglyceryl transfer). In terms of biological role, catalyzes the transfer of the diacylglyceryl group from phosphatidylglycerol to the sulfhydryl group of the N-terminal cysteine of a prolipoprotein, the first step in the formation of mature lipoproteins. The chain is Phosphatidylglycerol--prolipoprotein diacylglyceryl transferase from Azotobacter vinelandii (strain DJ / ATCC BAA-1303).